Here is a 313-residue protein sequence, read N- to C-terminus: NADH-ubiquinone oxidoreductase chain 1 (313 aa).

Transmembrane regions (helical) follow at residues 2–22 (ILSVIHIFLYFVPVLLAVAFL), 72–92 (VFFFAPMLALILALLLWMPVP), 102–122 (FAVLFVLAISSLSVYSIMASG), 148–168 (LGLIILSLICLVGGFNLAQFF), 173–193 (EVMLMLSCWPLGIMWFISTVA), 222–244 (FALFFLAEYANILFMNVLSALLF), 249–268 (FSLLGVAVKVGLLAGLYLWF), and 293–313 (LGLLMLNFSLPLTFSGIGGGL).

It belongs to the complex I subunit 1 family.

Its subcellular location is the mitochondrion inner membrane. It catalyses the reaction a ubiquinone + NADH + 5 H(+)(in) = a ubiquinol + NAD(+) + 4 H(+)(out). Core subunit of the mitochondrial membrane respiratory chain NADH dehydrogenase (Complex I) that is believed to belong to the minimal assembly required for catalysis. Complex I functions in the transfer of electrons from NADH to the respiratory chain. The immediate electron acceptor for the enzyme is believed to be ubiquinone. This chain is NADH-ubiquinone oxidoreductase chain 1 (ND1), found in Branchiostoma lanceolatum (Common lancelet).